A 101-amino-acid polypeptide reads, in one-letter code: Small ribosomal subunit protein uS14 (101 aa).

It belongs to the universal ribosomal protein uS14 family. Part of the 30S ribosomal subunit. Contacts proteins S3 and S10.

In terms of biological role, binds 16S rRNA, required for the assembly of 30S particles and may also be responsible for determining the conformation of the 16S rRNA at the A site. In Brucella abortus (strain S19), this protein is Small ribosomal subunit protein uS14.